The following is a 289-amino-acid chain: Orotidine 5'-phosphate decarboxylase (289 aa).

The Proton donor role is filled by Lys-97.

The protein belongs to the OMP decarboxylase family. Type 2 subfamily.

The enzyme catalyses orotidine 5'-phosphate + H(+) = UMP + CO2. The protein operates within pyrimidine metabolism; UMP biosynthesis via de novo pathway; UMP from orotate: step 2/2. This is Orotidine 5'-phosphate decarboxylase from Petrotoga mobilis (strain DSM 10674 / SJ95).